The chain runs to 271 residues: Putative two-component membrane permease complex subunit SMU_746c (271 aa).

Helical transmembrane passes span 34–54 (LAYI…TIWM) and 70–90 (FFSP…PTVP).

It belongs to the UPF0703 family. Interacts with SMU_747c.

Its subcellular location is the cell membrane. Could be part of a two-component membrane permease system responsible for amino acid transport under low pH. Involved in acidogenesis, biofilm formation and low-pH survival. The sequence is that of Putative two-component membrane permease complex subunit SMU_746c from Streptococcus mutans serotype c (strain ATCC 700610 / UA159).